Consider the following 739-residue polypeptide: MAKEINLTGEEVVALAAKYMNETDAAFVKKALDYATAAHFYQVRKSGEPYIVHPIQVAGILADLHLDAVTVACGFLHDVVEDTDITLDNIEFDFGKDVRDIVDGVTKLGKVEYKSHEEQLAENHRKMLMAMSKDIRVILVKLADRLHNMRTLKHLRKDKQERISRETMEIYAPLAHRLGISRIKWELEDLAFRYLNETEFYKISHMMNEKRREREALVDDIVTKIKSYTTEQGLFGDVYGRPKHIYSIYRKMRDKKKRFDQIFDLIAIRCVMETQSDVYAMVGYIHELWRPMPGRFKDYIAAPKANGYQSIHTTVYGPKGPIEIQIRTKEMHQVAEYGVAAHWAYKKGVRGKVNQAEQKVGMNWIKELVELQDASNGDAVDFVDSVKEDIFSERIYVFTPTGAVQELPKDSGPIDFAYAIHTQVGEKAIGAKVNGRMVPLTAKLKTGDVVEIVTNPNSFGPSRDWIKLVKTNKARNKIRQFFKNQDKELSVNKGRDMLVSYFQEQGYVANKYLDKKRIEAILPKVSVKSEESLYAAVGFGDISPVSVFNKLTEKERREEERAKAKAEAEELVNGGEIKHENKDVLKVRSENGVIIQGASGLLMRIAKCCNPVPGDPIEGYITKGRGIAIHRADCNNIKSQDGYQERLIEVEWDLDNSSKDYQAEIDIYGLNRRGLLNDVLQILSNSTKSISTVNAQPTKDMKFANIHVSFGIPNLTHLTTVVEKIKAVPDVYSVKRTNG.

In terms of domain architecture, HD spans 50–149 (YIVHPIQVAG…VKLADRLHNM (100 aa)). 2 residues coordinate Mn(2+): H53 and H77. Catalysis depends on nucleophile, for hydrolase activity residues E81 and D82. Position 144 (D144) interacts with Mn(2+). A Mg(2+)-binding site is contributed by D264. In terms of domain architecture, TGS spans 393 to 454 (ERIYVFTPTG…KTGDVVEIVT (62 aa)). Positions 664-739 (EIDIYGLNRR…DVYSVKRTNG (76 aa)) constitute an ACT domain.

The protein belongs to the RelA/SpoT family. Mg(2+) serves as cofactor. Requires Mn(2+) as cofactor.

The enzyme catalyses GTP + ATP = guanosine 3'-diphosphate 5'-triphosphate + AMP. The catalysed reaction is guanosine 3',5'-bis(diphosphate) + H2O = GDP + diphosphate + H(+). It functions in the pathway purine metabolism; ppGpp biosynthesis; ppGpp from GDP: step 1/1. Its pathway is purine metabolism; ppGpp biosynthesis; ppGpp from GTP: step 1/2. With respect to regulation, alpha-beta methylenyl ATP, an ATP-analog inhibitor of the synthase activity also reduces the hydrolase activity about 4-fold. Functionally, in eubacteria ppGpp (guanosine 3'-diphosphate 5'-diphosphate) is a mediator of the stringent response that coordinates a variety of cellular activities in response to changes in nutritional abundance. This enzyme catalyzes both the formation of pppGpp which is then hydrolyzed to form ppGpp, and the hydrolysis of ppGpp. The enzyme does not simultaneously display both synthase and hydrolase activities. In the structure of residues 1-385 there are 2 conformations seen, the hydrolase-OFF/synthase-ON and hydrolase-ON/synthase-OFF, suggesting there is ligand-induced signal transmission between the 2 active sites. The chain is Bifunctional (p)ppGpp synthase/hydrolase RelA (relA) from Streptococcus dysgalactiae subsp. equisimilis (Streptococcus equisimilis).